A 713-amino-acid polypeptide reads, in one-letter code: RNA-binding protein vts1 (713 aa).

Residues 154 to 188 (NSGLSLDKSLPSSPKGDSPSLSSSLPSLTTKSNLS) show a composition bias toward low complexity. Disordered stretches follow at residues 154–208 (NSGL…SSKH), 254–336 (EPPA…RDRG), 356–389 (DESSRSRWSNISYSPPPPPPPPELLNHSPKSRPL), 554–596 (EKIE…GNEL), and 667–713 (KAAK…SSMD). Polar residues-rich tracts occupy residues 189–208 (GNLNMVTPASTQGPAFSSKH) and 258–281 (SSASTSPRNTPTPSNNGTSINANV). 2 stretches are compositionally biased toward low complexity: residues 282-297 (TSSLTSNSTGKTSKTT) and 304-320 (SKKSLPSNSTPSKPNTS). Over residues 321–330 (FFETPHNNIW) the composition is skewed to polar residues. Pro residues predominate over residues 369–378 (SPPPPPPPPE). Polar residues predominate over residues 559–569 (PPNNSKNQTYR). Residues 570 to 583 (RSSRGSNKTRKSIS) show a composition bias toward basic residues. Positions 595–656 (ELPQDIPSWL…LKSFQEVAPL (62 aa)) constitute an SAM domain. Polar residues predominate over residues 670–681 (KNQSSESLTSFK). Serine 673 bears the Phosphoserine mark. Over residues 691 to 702 (SGSMSNEISSNS) the composition is skewed to low complexity. The span at 703-713 (TKQDVSSSSMD) shows a compositional bias: polar residues.

Belongs to the VTS1 family. As to quaternary structure, monomer. Binds to RNA.

Its subcellular location is the cytoplasm. It is found in the cytosol. The protein resides in the P-body. Functionally, RNA-binding protein involved in post-transcriptional regulation through transcript degradation. This chain is RNA-binding protein vts1, found in Schizosaccharomyces pombe (strain 972 / ATCC 24843) (Fission yeast).